The sequence spans 721 residues: Mitogen-activated protein kinase 6 (721 aa).

In terms of domain architecture, Protein kinase spans 20-316 (YMDLKPLGCG…AEEALSHPYM (297 aa)). ATP contacts are provided by residues 26 to 34 (LGCGGNGLV) and Lys-49. Asp-152 functions as the Proton acceptor in the catalytic mechanism. Thr-626 is modified (phosphothreonine). The TXY signature appears at 626-628 (TSY). Tyr-628 is subject to Phosphotyrosine.

It belongs to the protein kinase superfamily. CMGC Ser/Thr protein kinase family. MAP kinase subfamily. Requires Mg(2+) as cofactor. Post-translationally, dually phosphorylated on Thr-626 and Tyr-628, which activates the enzyme.

The enzyme catalyses L-seryl-[protein] + ATP = O-phospho-L-seryl-[protein] + ADP + H(+). It catalyses the reaction L-threonyl-[protein] + ATP = O-phospho-L-threonyl-[protein] + ADP + H(+). Activated by threonine and tyrosine phosphorylation. Functionally, phosphorylates microtubule-associated protein 2 (MAP2). May promote entry in the cell cycle. In Gallus gallus (Chicken), this protein is Mitogen-activated protein kinase 6 (MAPK6).